The sequence spans 37 residues: Large ribosomal subunit protein bL36c (37 aa).

The protein belongs to the bacterial ribosomal protein bL36 family.

It localises to the plastid. The protein localises to the chloroplast. This is Large ribosomal subunit protein bL36c from Staurastrum punctulatum (Green alga).